The chain runs to 421 residues: Immunoglobulin heavy constant epsilon (421 aa).

Ig-like domains follow at residues 5–97, 99–184, 201–301, and 310–410; these read PQLY…VNIT, PTLE…KVTS, PRGV…RSIT, and PEVY…KTIS. Cysteines 23 and 75 form a disulfide. N-linked (GlcNAc...) asparagine glycosylation is found at Asn43, Asn72, Asn84, Asn95, Asn166, Asn238, Asn261, Asn365, and Asn415. Cystine bridges form between Cys121/Cys180, Cys226/Cys285, and Cys330/Cys392.

As to quaternary structure, the basic structural unit consists of two identical heavy chains and two identical light chains; disulfide-linked. N-terminal variable regions of the heavy and light chains form the antigen binding sites, whereas the C-terminal constant regions of the heavy chains interact with immune receptors to mediate effector functions.

The protein localises to the secreted. The protein resides in the cell membrane. Constant region of immunoglobulin heavy chains. Immunoglobulins, also known as antibodies, are membrane-bound or secreted glycoproteins produced by B lymphocytes. In the recognition phase of humoral immunity, the membrane-bound immunoglobulins serve as receptors which, upon binding of a specific antigen, trigger the clonal expansion and differentiation of B lymphocytes into immunoglobulins-secreting plasma cells. Secreted immunoglobulins mediate the effector phase of humoral immunity, which results in the elimination of bound antigens. The antigen binding site is formed by the variable domain of one heavy chain, together with that of its associated light chain. Thus, each immunoglobulin has two antigen binding sites with remarkable affinity for a particular antigen. The variable domains are assembled by a process called V-(D)-J rearrangement and can then be subjected to somatic hypermutations which, after exposure to antigen and selection, allow affinity maturation for a particular antigen. The chain is Immunoglobulin heavy constant epsilon from Mus musculus (Mouse).